The primary structure comprises 274 residues: NADPH-dependent 7-cyano-7-deazaguanine reductase (274 aa).

80–82 (VES) contacts substrate. 82–83 (SK) contacts NADPH. The active-site Thioimide intermediate is Cys181. Asp188 functions as the Proton donor in the catalytic mechanism. A substrate-binding site is contributed by 220–221 (HE). Residue 249-250 (RG) participates in NADPH binding.

Belongs to the GTP cyclohydrolase I family. QueF type 2 subfamily. As to quaternary structure, homodimer.

The protein localises to the cytoplasm. It carries out the reaction 7-aminomethyl-7-carbaguanine + 2 NADP(+) = 7-cyano-7-deazaguanine + 2 NADPH + 3 H(+). The protein operates within tRNA modification; tRNA-queuosine biosynthesis. Catalyzes the NADPH-dependent reduction of 7-cyano-7-deazaguanine (preQ0) to 7-aminomethyl-7-deazaguanine (preQ1). The chain is NADPH-dependent 7-cyano-7-deazaguanine reductase from Burkholderia thailandensis (strain ATCC 700388 / DSM 13276 / CCUG 48851 / CIP 106301 / E264).